A 98-amino-acid polypeptide reads, in one-letter code: MSRRCEITGVGPMVGHNVSHSNIKTKRRFMPNLTKVTVLSDALGQNVTLRVTNAALRTVDAKGGLDAVLLKARDEVLSPRALKIKRQIKAKLAEQPAA.

This sequence belongs to the bacterial ribosomal protein bL28 family.

This Phenylobacterium zucineum (strain HLK1) protein is Large ribosomal subunit protein bL28.